Reading from the N-terminus, the 261-residue chain is 5'-nucleotidase SurE (261 aa).

The a divalent metal cation site is built by D12, D13, S43, and N99.

This sequence belongs to the SurE nucleotidase family. A divalent metal cation is required as a cofactor.

The protein resides in the cytoplasm. The enzyme catalyses a ribonucleoside 5'-phosphate + H2O = a ribonucleoside + phosphate. In terms of biological role, nucleotidase that shows phosphatase activity on nucleoside 5'-monophosphates. In Polynucleobacter asymbioticus (strain DSM 18221 / CIP 109841 / QLW-P1DMWA-1) (Polynucleobacter necessarius subsp. asymbioticus), this protein is 5'-nucleotidase SurE.